Consider the following 184-residue polypeptide: MLIILKENITTLGKLGEVVKVKPGYARNFLFPQKKAMKATKENLIKLEEQRLLLEEENTKKLNAAKVLASSLHDKFIILIKQASEDGKIFGSVTTREIAKTLLQEGYDISHHSLSLGGISIKNLGEYQVNIELHSKVIVPITIYVVRSEKDAHELRQAKLQNQKSEQQEAEQDASKEAADADDS.

A disordered region spans residues 156 to 184 (RQAKLQNQKSEQQEAEQDASKEAADADDS). Basic and acidic residues predominate over residues 173 to 184 (DASKEAADADDS).

It belongs to the bacterial ribosomal protein bL9 family.

In terms of biological role, binds to the 23S rRNA. The sequence is that of Large ribosomal subunit protein bL9 from Wolbachia pipientis subsp. Culex pipiens (strain wPip).